Here is a 135-residue protein sequence, read N- to C-terminus: Actin-related protein 2/3 complex subunit 5B (135 aa).

This sequence belongs to the ARPC5 family. As to quaternary structure, component of the Arp2/3 complex composed of ARP2, ARP3, ARPC1/p41-ARC, ARPC2/p34-ARC, ARPC3/p21-ARC, ARPC4/p20-ARC and ARPC5/p16-ARC.

The protein resides in the cytoplasm. It is found in the cytoskeleton. Its subcellular location is the cell projection. Its function is as follows. Functions as a component of the Arp2/3 complex which is involved in regulation of actin polymerization and together with an activating nucleation-promoting factor (NPF) mediates the formation of branched actin networks. Arp2/3 complex plays a critical role in the control of cell morphogenesis via the modulation of cell polarity development. In Arabidopsis thaliana (Mouse-ear cress), this protein is Actin-related protein 2/3 complex subunit 5B (ARPC5B).